A 202-amino-acid chain; its full sequence is FMN-dependent NADH:quinone oxidoreductase (202 aa).

FMN contacts are provided by residues Ser9, 15–17, and 94–97; these read SAS and MYNL.

Belongs to the azoreductase type 1 family. In terms of assembly, homodimer. The cofactor is FMN.

The enzyme catalyses 2 a quinone + NADH + H(+) = 2 a 1,4-benzosemiquinone + NAD(+). The catalysed reaction is N,N-dimethyl-1,4-phenylenediamine + anthranilate + 2 NAD(+) = 2-(4-dimethylaminophenyl)diazenylbenzoate + 2 NADH + 2 H(+). Functionally, quinone reductase that provides resistance to thiol-specific stress caused by electrophilic quinones. Its function is as follows. Also exhibits azoreductase activity. Catalyzes the reductive cleavage of the azo bond in aromatic azo compounds to the corresponding amines. The sequence is that of FMN-dependent NADH:quinone oxidoreductase from Gluconobacter oxydans (strain 621H) (Gluconobacter suboxydans).